The chain runs to 84 residues: Small ribosomal subunit protein uS17 (84 aa).

This sequence belongs to the universal ribosomal protein uS17 family. In terms of assembly, part of the 30S ribosomal subunit.

Its function is as follows. One of the primary rRNA binding proteins, it binds specifically to the 5'-end of 16S ribosomal RNA. The polypeptide is Small ribosomal subunit protein uS17 (Erwinia tasmaniensis (strain DSM 17950 / CFBP 7177 / CIP 109463 / NCPPB 4357 / Et1/99)).